We begin with the raw amino-acid sequence, 179 residues long: uncharacterized protein (179 aa).

This is an uncharacterized protein from Encephalitozoon cuniculi (strain GB-M1) (Microsporidian parasite).